A 361-amino-acid polypeptide reads, in one-letter code: UDP-3-O-acylglucosamine N-acyltransferase (361 aa).

The active-site Proton acceptor is histidine 253.

Belongs to the transferase hexapeptide repeat family. LpxD subfamily. In terms of assembly, homotrimer.

The catalysed reaction is a UDP-3-O-[(3R)-3-hydroxyacyl]-alpha-D-glucosamine + a (3R)-hydroxyacyl-[ACP] = a UDP-2-N,3-O-bis[(3R)-3-hydroxyacyl]-alpha-D-glucosamine + holo-[ACP] + H(+). It functions in the pathway bacterial outer membrane biogenesis; LPS lipid A biosynthesis. In terms of biological role, catalyzes the N-acylation of UDP-3-O-acylglucosamine using 3-hydroxyacyl-ACP as the acyl donor. Is involved in the biosynthesis of lipid A, a phosphorylated glycolipid that anchors the lipopolysaccharide to the outer membrane of the cell. The sequence is that of UDP-3-O-acylglucosamine N-acyltransferase from Burkholderia thailandensis (strain ATCC 700388 / DSM 13276 / CCUG 48851 / CIP 106301 / E264).